The sequence spans 794 residues: MEGNLSFSLMEASGRSIFFLIEGIREQSIKNMFSRMFSWSFVVAACLAGLFPAQSQGEEKAAQSGTIAVKVPASSLLMTRQETGETRLDRSFSNAGLSIGGKKYATGIGTHATSMIPLPVPENPKVLRLEGACGIDDGADGDGSVEFRVMSGSEVLWSSGVMRRGMAAKKFSIPVAENGIRHLYLMADRVDNNSYDHADWVDLAWKTTGSGQGMKGAVVNASEFGMVPGVRKDQGPALRAAVSALRRQGGGVLNIPRGIYHFYPEGALNMSFHISNHDQPLIHPVCVPLADLRNVRVEGNGSLFLFHGKVVPLLVMDSENVSINRLSVDYERSWCTEARVVKTDDRFTEVEIDKKAYPYEIRNNRFVFQGKGWEEGMGSCMAFEKGTGHIIANTSDIGWNGHVEPLGGSRLRLSWNLRQKGIKPGDTLVLRNYNRPHPGCVVYRARKTSLNDVSLHQSSGMALLVQRSEDFHMKGGGVMVRKGTGRVHTAGADATHFSNTRGGIVVEKALFEGMMDDAINVHSTCLGVMEVVDSHTLKCKYMHRQAVGFEVFLPGEKIRFINGPTLEPGGTATVKTAVKKNSAEMVITVEEPLPSSVRAGDAVENADFYPSVVFRNNIVRNNRARGSLFTTPERVLVEGNLFDHSSGSAILLAGDAQGWYESGACHEVVIRKNTFINNLTSRYQFTNAIISIYPEVKQLDRQRDYYHRNVLIENNVFKTFDVPLLFAISTDNLKFINNKVIYNDEFKGWGQKPFQFRRCANILIKDNKVLPPRTWTLEDCKLENTPSDQVRFGG.

An N-terminal signal peptide occupies residues 1–57 (MEGNLSFSLMEASGRSIFFLIEGIREQSIKNMFSRMFSWSFVVAACLAGLFPAQSQG). PbH1 repeat units follow at residues 468–499 (SEDF…HFSN), 609–631 (YPSV…LFTT), 632–654 (PERV…LLAG), 665–686 (CHEV…YQFT), and 707–728 (HRNV…LFAI).

It belongs to the glycosyl hydrolase 110 family. B subfamily.

The catalysed reaction is Hydrolysis of terminal, non-reducing branched (1-&gt;3)-alpha-D-galactosidic residues, producing free D-galactose.. It carries out the reaction Hydrolysis of terminal, non-reducing linear (1-&gt;3)-alpha-D-galactosidic residues, producing free D-galactose.. It catalyses the reaction Hydrolysis of terminal, non-reducing alpha-D-galactose residues in alpha-D-galactosides, including galactose oligosaccharides, galactomannans and galactolipids.. Its function is as follows. Alpha-galactosidase. Removes both branched alpha-1,3-linked galactose residues of blood group B antigens and linear alpha-1,3-linked galactose structures. The sequence is that of Alpha-1,3-galactosidase B (glaB) from Akkermansia muciniphila (strain ATCC BAA-835 / DSM 22959 / JCM 33894 / BCRC 81048 / CCUG 64013 / CIP 107961 / Muc).